Here is a 60-residue protein sequence, read N- to C-terminus: Sperm protamine P1 (60 aa).

A disordered region spans residues 1–60; it reads MARYRHSRSRSRSRYQRRRRRRSRYRSQRRRYRRRRGSRRRRRRGRRRGYRRRYSRRRRY.

The protein belongs to the protamine P1 family. As to expression, testis.

The protein resides in the nucleus. It localises to the chromosome. Its function is as follows. Protamines substitute for histones in the chromatin of sperm during the haploid phase of spermatogenesis. They compact sperm DNA into a highly condensed, stable and inactive complex. This is Sperm protamine P1 (PRM1) from Phascolarctos cinereus (Koala).